The chain runs to 440 residues: Chromosomal replication initiator protein DnaA (440 aa).

The interval 1-74 (MNPSQILENL…VQSGNKAIIN (74 aa)) is domain I, interacts with DnaA modulators. The segment at 74 to 99 (NIQAQSAKQSNKSTKIDIAHIKAQST) is domain II. Residues 100 to 316 (ILNPSFTFES…GIIISLNAYA (217 aa)) are domain III, AAA+ region. Residues glycine 146, glycine 148, lysine 149, and threonine 150 each contribute to the ATP site. Residues 317 to 440 (TILGQEITLE…KNKILVKSQS (124 aa)) are domain IV, binds dsDNA.

It belongs to the DnaA family. As to quaternary structure, oligomerizes as a right-handed, spiral filament on DNA at oriC.

The protein localises to the cytoplasm. In terms of biological role, plays an essential role in the initiation and regulation of chromosomal replication. ATP-DnaA binds to the origin of replication (oriC) to initiate formation of the DNA replication initiation complex once per cell cycle. Binds the DnaA box (a 9 base pair repeat at the origin) and separates the double-stranded (ds)DNA. Forms a right-handed helical filament on oriC DNA; dsDNA binds to the exterior of the filament while single-stranded (ss)DNA is stabiized in the filament's interior. The ATP-DnaA-oriC complex binds and stabilizes one strand of the AT-rich DNA unwinding element (DUE), permitting loading of DNA polymerase. After initiation quickly degrades to an ADP-DnaA complex that is not apt for DNA replication. Binds acidic phospholipids. This Campylobacter jejuni subsp. jejuni serotype O:2 (strain ATCC 700819 / NCTC 11168) protein is Chromosomal replication initiator protein DnaA.